A 384-amino-acid polypeptide reads, in one-letter code: GDSL esterase/lipase ENOD8 (384 aa).

Positions 1–31 are cleaved as a signal peptide; that stretch reads MKFMAKIELSRHIPLVTLIVLVLCITPPIFA. The Nucleophile role is filled by serine 46. N-linked (GlcNAc...) asparagine glycosylation is found at asparagine 105, asparagine 191, asparagine 198, asparagine 276, and asparagine 330. Catalysis depends on residues aspartate 349 and histidine 352.

The protein belongs to the 'GDSL' lipolytic enzyme family. In terms of tissue distribution, expressed in root nodules (at protein level).

It localises to the symbiosome. Has lipase and esterase activities. Probably involved in root nodule physiology. This chain is GDSL esterase/lipase ENOD8, found in Medicago truncatula (Barrel medic).